The sequence spans 348 residues: Protein RecA (348 aa).

64-71 provides a ligand contact to ATP; sequence GPESSGKT. Residues 325 to 335 show a composition bias toward basic and acidic residues; that stretch reads YEIDGASKEPL. The segment at 325–348 is disordered; that stretch reads YEIDGASKEPLEETEETLSLLDDE. A compositionally biased stretch (acidic residues) spans 336 to 348; it reads EETEETLSLLDDE.

It belongs to the RecA family.

The protein localises to the cytoplasm. Functionally, can catalyze the hydrolysis of ATP in the presence of single-stranded DNA, the ATP-dependent uptake of single-stranded DNA by duplex DNA, and the ATP-dependent hybridization of homologous single-stranded DNAs. It interacts with LexA causing its activation and leading to its autocatalytic cleavage. In Listeria seeligeri, this protein is Protein RecA.